Here is a 574-residue protein sequence, read N- to C-terminus: Glycine--tRNA ligase (574 aa).

Substrate is bound by residues Arg-96 and Glu-162. Residues Arg-194–Glu-196, Ile-204–Phe-209, Glu-327–Cys-328, and Gly-450–Arg-453 contribute to the ATP site. Phe-209–Glu-213 contributes to the substrate binding site. Glu-446 to Gly-450 contributes to the substrate binding site.

It belongs to the class-II aminoacyl-tRNA synthetase family.

It localises to the cytoplasm. The catalysed reaction is tRNA(Gly) + glycine + ATP = glycyl-tRNA(Gly) + AMP + diphosphate. Catalyzes the attachment of glycine to tRNA(Gly). The sequence is that of Glycine--tRNA ligase from Methanococcus maripaludis (strain DSM 14266 / JCM 13030 / NBRC 101832 / S2 / LL).